Consider the following 308-residue polypeptide: N-acetyl-gamma-glutamyl-phosphate reductase (308 aa).

Residue Cys-117 is part of the active site.

This sequence belongs to the NAGSA dehydrogenase family. Type 2 subfamily.

It is found in the cytoplasm. It carries out the reaction N-acetyl-L-glutamate 5-semialdehyde + phosphate + NADP(+) = N-acetyl-L-glutamyl 5-phosphate + NADPH + H(+). It participates in amino-acid biosynthesis; L-arginine biosynthesis; N(2)-acetyl-L-ornithine from L-glutamate: step 3/4. In terms of biological role, catalyzes the NADPH-dependent reduction of N-acetyl-5-glutamyl phosphate to yield N-acetyl-L-glutamate 5-semialdehyde. This Sinorhizobium fredii (strain NBRC 101917 / NGR234) protein is N-acetyl-gamma-glutamyl-phosphate reductase.